Here is an 848-residue protein sequence, read N- to C-terminus: Mitochondrial escape protein 2 (848 aa).

A mitochondrion-targeting transit peptide spans 1-42 (MNSITTPRMGATILRTIAPNVGVLSQVLPLGLRRVYPRGVRW). At 43–284 (VSSEIQQKDR…IRNFYVTHTR (242 aa)) the chain is on the mitochondrial matrix side. The 74-residue stretch at 196-269 (TTVIIKCQGP…TVLHLQYENV (74 aa)) folds into the RRM domain. The helical transmembrane segment at 285–305 (IAIPVTFALLSILAVLIFDPI) threads the bilayer. Over 306 to 848 (REFFIEQKIT…LSQESNNRRK (543 aa)) the chain is Mitochondrial intermembrane. The disordered stretch occupies residues 603–627 (RAKKAEEDEPTEKASPEHSQYDEND). Positions 613 to 627 (TEKASPEHSQYDEND) are enriched in basic and acidic residues.

This sequence belongs to the YME2 family.

The protein resides in the mitochondrion inner membrane. In terms of biological role, plays a role in maintaining the mitochondrial genome and in controlling the mtDNA escape. Involved in the regulation of mtDNA nucleotide structure and number. May have a dispensable role in early maturation of pre-rRNA. The sequence is that of Mitochondrial escape protein 2 (YME2) from Candida glabrata (strain ATCC 2001 / BCRC 20586 / JCM 3761 / NBRC 0622 / NRRL Y-65 / CBS 138) (Yeast).